The following is a 674-amino-acid chain: Xaa-Pro aminopeptidase 2 (674 aa).

The signal sequence occupies residues 1-22 (MAQAYWQCYPWLVLLCACAWSY). An N-linked (GlcNAc...) asparagine glycan is attached at N65. R116 is a binding site for substrate. 3 N-linked (GlcNAc...) asparagine glycosylation sites follow: N270, N278, and N293. H430 serves as a coordination point for substrate. Zn(2+) is bound by residues D450, D461, and H524. Residues H524, H533, and E555 each contribute to the substrate site. E555 and E569 together coordinate Zn(2+). A lipid anchor (GPI-anchor amidated alanine) is attached at A650. Positions 651 to 674 (RAPHIISWTSLWVASALAILSWSS) are cleaved as a propeptide — removed in mature form.

This sequence belongs to the peptidase M24B family. Homotrimer. Requires Zn(2+) as cofactor. Post-translationally, N-glycosylated. As to expression, strongly expressed in small intestine, heart and lung. Also detected in testis, skeletal muscle, spleen, liver, kidney, brain, uterus, eye, lymph node, thymus, stomach, prostate and bone marrow.

It localises to the cell membrane. It catalyses the reaction Release of any N-terminal amino acid, including proline, that is linked to proline, even from a dipeptide or tripeptide.. Membrane-bound metalloprotease which catalyzes the removal of a penultimate prolyl residue from the N-termini of peptides, such as Arg-Pro-Pro. May play a role in the metabolism of the vasodilator bradykinin. The polypeptide is Xaa-Pro aminopeptidase 2 (Mus musculus (Mouse)).